The chain runs to 650 residues: Pentatricopeptide repeat-containing protein At1g51965, mitochondrial (650 aa).

A mitochondrion-targeting transit peptide spans 1–23 (MKLLRRRFFNSVNTITRPNRRHY). PPR repeat units follow at residues 132–169 (DPFL…NVHG), 170–200 (NIST…WDLK), 202–236 (NSFT…GHKL), 237–267 (DIFA…RHCR), 269–303 (DEYT…GLTL), 304–338 (NVVG…GCRP), 339–369 (NEYT…SKRY), 371–405 (TQGI…PVKG), 406–440 (ERDS…GVVT), 441–475 (DTMM…GPSP), 476–510 (DIFT…DCKP), 511–545 (DIIS…GLNP), 546–580 (DVVT…GCQP), and 581–615 (NIVT…GLTP).

Belongs to the PPR family. P subfamily.

Its subcellular location is the mitochondrion. In Arabidopsis thaliana (Mouse-ear cress), this protein is Pentatricopeptide repeat-containing protein At1g51965, mitochondrial.